The sequence spans 2329 residues: Pre-mRNA-splicing factor 8 homolog (2329 aa).

A disordered region spans residues 1–53; that stretch reads MANYGGHPQTEPHAIPDSILEEKSRKWKQLQGKRYSEKKKFGMSDTQKEEMPP. Basic and acidic residues predominate over residues 34–53; sequence RYSEKKKFGMSDTQKEEMPP. The interval 804–1295 is reverse transcriptase homology domain; it reads TTVHWLESRR…KIQTRIKIGL (492 aa). Residues 1296 to 1570 form a linker region; that stretch reads NSKMPSRFPP…TLKISLIQIF (275 aa). An important for branch point selection region spans residues 1506–1519; it reads MKFKKLTNAQRSGL. The segment at 1574–1745 is restriction endonuclease homology domain; sequence LWQKIHESVV…LRERIRKGLQ (172 aa). An RNase H homology domain region spans residues 1760–2013; sequence NYGELFSNQI…ILGMEISAPS (254 aa). Residues 2096 to 2227 enclose the MPN domain; it reads TYILPKNILK…LTAYKLTPSG (132 aa).

As to quaternary structure, part of the U5 snRNP complex and of the U4/U6-U5 tri-snRNP complex.

The protein resides in the nucleus. Functions as a scaffold that mediates the ordered assembly of spliceosomal proteins and snRNAs. Required for the assembly of the U4/U6-U5 tri-snRNP complex. Functions as a scaffold that positions spliceosomal U2, U5 and U6 snRNAs at splice sites on pre-mRNA substrates, so that splicing can occur. Interacts with both the 5' and the 3' splice site. This chain is Pre-mRNA-splicing factor 8 homolog (prp-8), found in Caenorhabditis elegans.